The chain runs to 261 residues: Receptor expression-enhancing protein 4 (261 aa).

2 consecutive transmembrane segments (helical) span residues 1-21 and 35-55; these read MVSWIISRAVVLVFGLLYPAY and YVRWMMYWIVFALFMTVETFT. Residues 167–261 form a disordered region; that stretch reads YTDALYPDEP…KKPAQSEPEN (95 aa). The span at 221 to 230 shows a compositional bias: polar residues; the sequence is KSLQRSQSLR.

The protein belongs to the DP1 family. Interacts with microtubules. During gastrulation, expressed on the dorsal side of the embryo and then in the neural plate and neural tube. At tailbud stages, expressed in the somites, neural tube and otic vesicle.

It localises to the endoplasmic reticulum membrane. Functionally, microtubule-binding protein required to ensure proper cell division and nuclear envelope reassembly by sequestering the endoplasmic reticulum away from chromosomes during mitosis. Probably acts by clearing the endoplasmic reticulum membrane from metaphase chromosomes. May play a role in the maintenance of both the nervous system and the musculature. The protein is Receptor expression-enhancing protein 4 (reep4) of Xenopus laevis (African clawed frog).